Consider the following 450-residue polypeptide: MLAVAVLAAGKGTRMKSNLPKVLQPLAGATLVERVLASARNLRPERRLLIVGHQAERVEQQLSAVDGLEFVLQQPQNGTGHAVQQLLDPLANFEGELLVLNGDVPLLRAETIDQLVSTHRSSGAQVTLLTARLDDPTGYGRVFADEQGAVSSIIEHRDCSEEQRRNNLTNAGIYCFNWTALAEVLPKLSTDNDQGELYLTDTVAMLTKAMHVEVADPDEVNGINNRQQLAQCETMLQERLRHHWMAEGVTFVDPASCTLSEGCQFGRDVVIEPQTHLRGRCQIGDESRLGPGSLIEDAELGRGVTVVMSVVREASVGDGVCIGPFAHLRPAAVIGNNCRIGNFVEVKKSTVGEASKVNHLSYIGDAELGASVNVGAGTITANYDGVNKHRTVIGDGSKTGANSVLVAPIQLGNKVTVAAGSTLTKNVPDGALALGRAKQLIKENWAGPQG.

Residues 1 to 226 are pyrophosphorylase; the sequence is MLAVAVLAAG…PDEVNGINNR (226 aa). Residues 7 to 10, K21, Q73, and 78 to 79 contribute to the UDP-N-acetyl-alpha-D-glucosamine site; these read LAAG and GT. A Mg(2+)-binding site is contributed by D103. 4 residues coordinate UDP-N-acetyl-alpha-D-glucosamine: G140, E155, N170, and N224. N224 contributes to the Mg(2+) binding site. Positions 227 to 247 are linker; the sequence is QQLAQCETMLQERLRHHWMAE. The segment at 248–450 is N-acetyltransferase; that stretch reads GVTFVDPASC…IKENWAGPQG (203 aa). UDP-N-acetyl-alpha-D-glucosamine contacts are provided by R329 and K347. The active-site Proton acceptor is H359. UDP-N-acetyl-alpha-D-glucosamine-binding residues include Y362 and N373. Acetyl-CoA is bound by residues A376, 382–383, A419, and R436; that span reads NY.

It in the N-terminal section; belongs to the N-acetylglucosamine-1-phosphate uridyltransferase family. In the C-terminal section; belongs to the transferase hexapeptide repeat family. As to quaternary structure, homotrimer. The cofactor is Mg(2+).

It is found in the cytoplasm. It carries out the reaction alpha-D-glucosamine 1-phosphate + acetyl-CoA = N-acetyl-alpha-D-glucosamine 1-phosphate + CoA + H(+). It catalyses the reaction N-acetyl-alpha-D-glucosamine 1-phosphate + UTP + H(+) = UDP-N-acetyl-alpha-D-glucosamine + diphosphate. The protein operates within nucleotide-sugar biosynthesis; UDP-N-acetyl-alpha-D-glucosamine biosynthesis; N-acetyl-alpha-D-glucosamine 1-phosphate from alpha-D-glucosamine 6-phosphate (route II): step 2/2. Its pathway is nucleotide-sugar biosynthesis; UDP-N-acetyl-alpha-D-glucosamine biosynthesis; UDP-N-acetyl-alpha-D-glucosamine from N-acetyl-alpha-D-glucosamine 1-phosphate: step 1/1. It participates in bacterial outer membrane biogenesis; LPS lipid A biosynthesis. Its function is as follows. Catalyzes the last two sequential reactions in the de novo biosynthetic pathway for UDP-N-acetylglucosamine (UDP-GlcNAc). The C-terminal domain catalyzes the transfer of acetyl group from acetyl coenzyme A to glucosamine-1-phosphate (GlcN-1-P) to produce N-acetylglucosamine-1-phosphate (GlcNAc-1-P), which is converted into UDP-GlcNAc by the transfer of uridine 5-monophosphate (from uridine 5-triphosphate), a reaction catalyzed by the N-terminal domain. In Synechococcus sp. (strain RCC307), this protein is Bifunctional protein GlmU.